The chain runs to 147 residues: Large ribosomal subunit protein uL13 (147 aa).

It belongs to the universal ribosomal protein uL13 family. As to quaternary structure, part of the 50S ribosomal subunit.

In terms of biological role, this protein is one of the early assembly proteins of the 50S ribosomal subunit, although it is not seen to bind rRNA by itself. It is important during the early stages of 50S assembly. In Pediococcus pentosaceus (strain ATCC 25745 / CCUG 21536 / LMG 10740 / 183-1w), this protein is Large ribosomal subunit protein uL13.